A 20-amino-acid polypeptide reads, in one-letter code: Peptide encoded by miPEP171b (20 aa).

In terms of tissue distribution, lateral root initiations.

In terms of biological role, regulatory peptide encoded by the primary transcript (pri-miR171b) of the microRNA miR171b that enhances the accumulation of its corresponding mature miRNA. Acts probably as a transcriptional activator of its corresponding pri-miRNA. Has no effect on the accumulation of other miRNAs. Addition of synthetic miPEP171b increases the abundance of miR171b, with consequent reduction of lateral root formation. In Medicago truncatula (Barrel medic), this protein is Peptide encoded by miPEP171b.